The chain runs to 96 residues: Glutamyl-tRNA(Gln) amidotransferase subunit C (96 aa).

This sequence belongs to the GatC family. As to quaternary structure, heterotrimer of A, B and C subunits.

It carries out the reaction L-glutamyl-tRNA(Gln) + L-glutamine + ATP + H2O = L-glutaminyl-tRNA(Gln) + L-glutamate + ADP + phosphate + H(+). It catalyses the reaction L-aspartyl-tRNA(Asn) + L-glutamine + ATP + H2O = L-asparaginyl-tRNA(Asn) + L-glutamate + ADP + phosphate + 2 H(+). Allows the formation of correctly charged Asn-tRNA(Asn) or Gln-tRNA(Gln) through the transamidation of misacylated Asp-tRNA(Asn) or Glu-tRNA(Gln) in organisms which lack either or both of asparaginyl-tRNA or glutaminyl-tRNA synthetases. The reaction takes place in the presence of glutamine and ATP through an activated phospho-Asp-tRNA(Asn) or phospho-Glu-tRNA(Gln). This is Glutamyl-tRNA(Gln) amidotransferase subunit C from Halalkalibacterium halodurans (strain ATCC BAA-125 / DSM 18197 / FERM 7344 / JCM 9153 / C-125) (Bacillus halodurans).